Here is a 39-residue protein sequence, read N- to C-terminus: uncharacterized protein (39 aa).

A helical transmembrane segment spans residues 18 to 38 (AIKVIALVVLITISAVVYLSV).

Its subcellular location is the membrane. This is an uncharacterized protein from Enterobacteriaceae (Bacteriophage Mu).